The chain runs to 198 residues: Nucleoside triphosphate pyrophosphatase (198 aa).

Asp-75 serves as the catalytic Proton acceptor.

It belongs to the Maf family. A divalent metal cation is required as a cofactor.

The protein resides in the cytoplasm. It carries out the reaction a ribonucleoside 5'-triphosphate + H2O = a ribonucleoside 5'-phosphate + diphosphate + H(+). The catalysed reaction is a 2'-deoxyribonucleoside 5'-triphosphate + H2O = a 2'-deoxyribonucleoside 5'-phosphate + diphosphate + H(+). Nucleoside triphosphate pyrophosphatase. May have a dual role in cell division arrest and in preventing the incorporation of modified nucleotides into cellular nucleic acids. In Hyphomonas neptunium (strain ATCC 15444), this protein is Nucleoside triphosphate pyrophosphatase.